Reading from the N-terminus, the 305-residue chain is tRNA uridine(34) hydroxylase (305 aa).

The Rhodanese domain maps to 126–220 (CDPEVTVIDT…YLEEVPAQES (95 aa)). The Cysteine persulfide intermediate role is filled by Cys-180.

The protein belongs to the TrhO family.

It carries out the reaction uridine(34) in tRNA + AH2 + O2 = 5-hydroxyuridine(34) in tRNA + A + H2O. Catalyzes oxygen-dependent 5-hydroxyuridine (ho5U) modification at position 34 in tRNAs. This is tRNA uridine(34) hydroxylase from Nostoc punctiforme (strain ATCC 29133 / PCC 73102).